The following is a 288-amino-acid chain: Ankyrin repeat and SOCS box protein 8 (288 aa).

At Ser17 the chain carries Phosphoserine. ANK repeat units follow at residues 52 to 81, 85 to 113, 117 to 146, and 150 to 179; these read GTLK…EVNA, YNRT…NPNA, NRDT…SVNA, and NNDT…EVRV. Residues 235-288 form the SOCS box domain; it reads QLCEKLTVLCSAPGTLKTLARYAVRRSLGLQYLPDAVKGLPLPVSLKDYLLLLE.

The protein belongs to the ankyrin SOCS box (ASB) family. As to quaternary structure, interacts with TBK1; this interaction promotes TBK1 proteasomal degradation. Post-translationally, phosphorylated by TBK1.

It is found in the cytoplasm. It participates in protein modification; protein ubiquitination. Functionally, may be a substrate-recognition component of a SCF-like ECS (Elongin-Cullin-SOCS-box protein) E3 ubiquitin-protein ligase complex which mediates the ubiquitination and subsequent proteasomal degradation of target proteins. Inhibits IFN-beta production through the IRF3 signaling pathway by targeting TBK1 via 'Lys-48'-linked ubiquitination, leading to its proteasomal degradation. This Mus musculus (Mouse) protein is Ankyrin repeat and SOCS box protein 8 (Asb8).